Consider the following 306-residue polypeptide: 5'-hydroxyaverantin dehydrogenase (306 aa).

Residues serine 25, isoleucine 27, glutamine 48, lysine 52, and aspartate 73 each coordinate NADP(+). The active-site Proton donor is serine 173. Positions 187, 191, 220, and 222 each coordinate NADP(+). Tyrosine 187 acts as the Proton acceptor in catalysis. Lysine 191 acts as the Lowers pKa of active site Tyr in catalysis.

Belongs to the short-chain dehydrogenases/reductases (SDR) family. As to quaternary structure, homodimer.

It is found in the cytoplasm. It localises to the cytosol. The catalysed reaction is (1'S,5'S)-5'-hydroxyaverantin + NAD(+) = (S)-5'-oxoaverantin + NADH + H(+). The enzyme catalyses (1'S,5'R)-5'-hydroxyaverantin + NAD(+) = (S)-5'-oxoaverantin + NADH + 2 H(+). It functions in the pathway mycotoxin biosynthesis. In terms of biological role, 5'-hydroxyaverantin dehydrogenase; part of the fragmented gene cluster that mediates the biosynthesis of dothistromin (DOTH), a polyketide toxin very similar in structure to the aflatoxin precursor, versicolorin B. The first step of the pathway is the conversion of acetate to norsolorinic acid (NOR) and requires the fatty acid synthase subunits hexA and hexB, as well as the polyketide synthase pksA. PksA combines a hexanoyl starter unit and 7 malonyl-CoA extender units to synthesize the precursor NOR. The hexanoyl starter unit is provided to the acyl-carrier protein (ACP) domain by the fungal fatty acid synthase hexA/hexB. The second step is the conversion of NOR to averantin (AVN) and requires the norsolorinic acid ketoreductase nor1, which catalyzes the dehydration of norsolorinic acid to form (1'S)-averantin. The cytochrome P450 monooxygenase avnA then catalyzes the hydroxylation of AVN to 5'hydroxyaverantin (HAVN). The next step is performed by adhA that transforms HAVN to averufin (AVF). Averufin might then be converted to hydroxyversicolorone by cypX and avfA. Hydroxyversicolorone is further converted versiconal hemiacetal acetate (VHA) by moxY. VHA is then the substrate for the versiconal hemiacetal acetate esterase est1 to yield versiconal (VAL). Versicolorin B synthase vbsA then converts VAL to versicolorin B (VERB) by closing the bisfuran ring. Then, the activity of the versicolorin B desaturase verB leads to versicolorin A (VERA). DotB, a predicted chloroperoxidase, may perform epoxidation of the A-ring of VERA. Alternatively, a cytochrome P450, such as cypX or avnA could catalyze this step. It is also possible that another, uncharacterized, cytochrome P450 enzyme is responsible for this step. Opening of the epoxide could potentially be achieved by the epoxide hydrolase epoA. However, epoA seems not to be required for DOTH biosynthesis, but other epoxide hydrolases may have the ability to complement this hydrolysis. Alternatively, opening of the epoxide ring could be achieved non-enzymatically. The next step is the deoxygenation of ring A to yield the 5,8-dihydroxyanthraquinone which is most likely catalyzed by the NADPH dehydrogenase encoded by ver1. The last stages of DOTH biosynthesis are proposed to involve hydroxylation of the bisfuran. OrdB and norB might have oxidative roles here. An alternative possibility is that cytochrome P450 monoogenases such as avnA and cypX might perform these steps in addition to previously proposed steps. The polypeptide is 5'-hydroxyaverantin dehydrogenase (Dothistroma septosporum (strain NZE10 / CBS 128990) (Red band needle blight fungus)).